The sequence spans 157 residues: Cyclic pyranopterin monophosphate synthase (157 aa).

Substrate-binding positions include 74–76 (MCH) and 112–113 (ME). D127 is a catalytic residue.

The protein belongs to the MoaC family. As to quaternary structure, homohexamer; trimer of dimers.

The catalysed reaction is (8S)-3',8-cyclo-7,8-dihydroguanosine 5'-triphosphate = cyclic pyranopterin phosphate + diphosphate. The protein operates within cofactor biosynthesis; molybdopterin biosynthesis. Its function is as follows. Catalyzes the conversion of (8S)-3',8-cyclo-7,8-dihydroguanosine 5'-triphosphate to cyclic pyranopterin monophosphate (cPMP). The polypeptide is Cyclic pyranopterin monophosphate synthase (Syntrophomonas wolfei subsp. wolfei (strain DSM 2245B / Goettingen)).